A 263-amino-acid polypeptide reads, in one-letter code: Protein PUN1 (263 aa).

Over 1-6 (MRNFFT) the chain is Cytoplasmic. Residues 7-27 (LFFAAIFSLGALILAIVACAG) traverse the membrane as a helical segment. The Extracellular segment spans residues 28–143 (STKNYSPINK…MTYYNNLVKC (116 aa)). An N-linked (GlcNAc...) asparagine glycan is attached at Asn100. Residues 144-164 (MFITILIGIVLTFVNLVFNVL) form a helical membrane-spanning segment. The Cytoplasmic portion of the chain corresponds to 165-172 (RWIIHIRP). Residues 173–193 (LTWFGAFFSFFAFAALLVSIG) traverse the membrane as a helical segment. Residues 194-223 (SCLGTYSYIKYILKHNYSDYGISMSIGRNY) are Extracellular-facing. A glycan (N-linked (GlcNAc...) asparagine) is linked at Asn209. A helical membrane pass occupies residues 224-244 (QGLMWGAVVGALLNFILWCSV). At 245 to 263 (RSRPTVIYANAPIEEKPLI) the chain is on the cytoplasmic side. Lys260 is covalently cross-linked (Glycyl lysine isopeptide (Lys-Gly) (interchain with G-Cter in ubiquitin)).

Belongs to the SUR7 family. In terms of processing, N-glycosylated.

Its subcellular location is the cell membrane. Contributes to the wild-type cellular response to nitrogen stress through signaling pathways that regulate the expression of genes involved in amino acid biosynthesis. Required for wild-type filamentous growth, cell growth, and cell-cell adhesion. The polypeptide is Protein PUN1 (PUN1) (Saccharomyces cerevisiae (strain ATCC 204508 / S288c) (Baker's yeast)).